Here is a 194-residue protein sequence, read N- to C-terminus: Protein phosphatase 1 regulatory subunit 1B (194 aa).

Met-1 bears the N-acetylmethionine mark. The tract at residues 1-194 (MDPKDRKKIQ…GEEPQHPSPP (194 aa)) is disordered. Phosphothreonine; by PKA is present on Thr-34. Residues 41–63 (VSEHSSPEEEASPHQRTSGEGHH) are compositionally biased toward basic and acidic residues. Ser-45 and Ser-46 each carry phosphoserine. A Phosphothreonine modification is found at Thr-75. Residues 84–95 (HLQTISNLSENQ) are compositionally biased toward polar residues. Ser-97 and Ser-130 each carry phosphoserine. A compositionally biased stretch (acidic residues) spans 113–131 (QEDDEEDEDEEEDEEEDSQ). Basic and acidic residues predominate over residues 160–170 (PPLDEPQRDGN). Residue Ser-192 is modified to Phosphoserine.

The protein belongs to the protein phosphatase inhibitor 1 family. Dopamine- and cyclic AMP-regulated neuronal phosphoprotein. In terms of processing, phosphorylation of Thr-34 is required for activity.

It is found in the cytoplasm. Inhibitor of protein-phosphatase 1. This is Protein phosphatase 1 regulatory subunit 1B (Ppp1r1b) from Mus musculus (Mouse).